Reading from the N-terminus, the 319-residue chain is ATP-dependent 6-phosphofructokinase (319 aa).

Residue G11 coordinates ATP. An ADP-binding site is contributed by 21-25; that stretch reads RAVVR. Residues 72–73 and 102–105 each bind ATP; these read RC and GDGS. Residue D103 participates in Mg(2+) binding. Position 125 to 127 (125 to 127) interacts with substrate; the sequence is TID. D127 (proton acceptor) is an active-site residue. Residue R154 coordinates ADP. Substrate is bound by residues R162 and 169–171; that span reads MGR. ADP contacts are provided by residues 185-187, K211, and 213-215; these read GAE and KMH. Residues E222, R243, and 249-252 contribute to the substrate site; that span reads HIQR.

The protein belongs to the phosphofructokinase type A (PFKA) family. ATP-dependent PFK group I subfamily. Prokaryotic clade 'B1' sub-subfamily. As to quaternary structure, homotetramer. Requires Mg(2+) as cofactor.

Its subcellular location is the cytoplasm. It carries out the reaction beta-D-fructose 6-phosphate + ATP = beta-D-fructose 1,6-bisphosphate + ADP + H(+). Its pathway is carbohydrate degradation; glycolysis; D-glyceraldehyde 3-phosphate and glycerone phosphate from D-glucose: step 3/4. Allosterically activated by ADP and other diphosphonucleosides, and allosterically inhibited by phosphoenolpyruvate. Functionally, catalyzes the phosphorylation of D-fructose 6-phosphate to fructose 1,6-bisphosphate by ATP, the first committing step of glycolysis. The protein is ATP-dependent 6-phosphofructokinase of Clostridium botulinum (strain ATCC 19397 / Type A).